We begin with the raw amino-acid sequence, 319 residues long: Zinc metalloproteinase/disintegrin (319 aa).

Residues 1-28 (EDEAPKMCGVTQNWESYEPIKKASQSNL) constitute a propeptide that is removed on maturation. Residues 34–230 (RYIELVIVAD…QKPQCILNKP (197 aa)) enclose the Peptidase M12B domain. 2 residues coordinate Ca(2+): Glu37 and Asp121. Cystine bridges form between Cys145-Cys225, Cys185-Cys209, and Cys187-Cys192. Residue His170 coordinates Zn(2+). Residue Glu171 is part of the active site. Residues His174 and His180 each contribute to the Zn(2+) site. Ca(2+) contacts are provided by Cys225 and Asn228. The propeptide occupies 231–246 (LRTDTVSTPVSGNELL). A Disintegrin domain is found at 238–319 (TPVSGNELLE…AGCPRNPFHA (82 aa)). 6 cysteine pairs are disulfide-bonded: Cys252–Cys267, Cys254–Cys262, Cys261–Cys284, Cys275–Cys281, Cys280–Cys305, and Cys293–Cys312. The Cell attachment site motif lies at 297-299 (RGD).

It belongs to the venom metalloproteinase (M12B) family. P-II subfamily. P-IIa sub-subfamily. Monomer. The cofactor is Zn(2+). As to expression, expressed by the venom gland.

The protein localises to the secreted. With respect to regulation, excess of calcium ions significantly suppress the autoproteolysis of the enzyme. Its function is as follows. metalloproteinase that impairs hemostasis in the envenomed animal. Shows autoproteolysis dependent on pH and temperature. Does not show hemorrhagic activity. Functionally, inhibits platelet aggregation induced by ADP (IC(50) is 200 nM), collagen (IC(50) is 500 nM), thrombin and epinephrin (IC(50) is 300 nM). Does not inhibit aggregation induced by ristocetin. In terms of biological role, inhibits platelet aggregation induced by ADP (IC(50) is 100 nM), collagen (IC(50) is 500 nM), thrombin and epinephrin (IC(50) is 300 nM). Does not inhibit aggregation induced by ristocetin. Significantly inhibits angiogenesis both in vivo and in vitro. In Gloydius brevicauda (Korean slamosa snake), this protein is Zinc metalloproteinase/disintegrin.